Reading from the N-terminus, the 226-residue chain is MEPIKNLPRLCRTLGYEFNNIELLIQALTHRSAANKHNERLEFLGDSILSIAISDALYHQFPKATEGDLSRMRATLVKGDTLTIIAKEFKLGDYLYLGPGELKSGGFRRESILADAVEAIIGAVYLDADIEVCRKLLLSWYQERLAEIKPGINQKDPKTILQEYLQGFKKPLPDYQVVAVEGEAHDQTFTVECKISELDKVVTGVASSRRKAEQLAAAQVLELLNK.

The 123-residue stretch at 7–129 folds into the RNase III domain; it reads LPRLCRTLGY…IIGAVYLDAD (123 aa). Glu42 contacts Mg(2+). Residue Asp46 is part of the active site. Residues Asp115 and Glu118 each coordinate Mg(2+). The active site involves Glu118. One can recognise a DRBM domain in the interval 156–226; it reads DPKTILQEYL…AAQVLELLNK (71 aa).

The protein belongs to the ribonuclease III family. In terms of assembly, homodimer. Requires Mg(2+) as cofactor.

The protein localises to the cytoplasm. The enzyme catalyses Endonucleolytic cleavage to 5'-phosphomonoester.. Its function is as follows. Digests double-stranded RNA. Involved in the processing of primary rRNA transcript to yield the immediate precursors to the large and small rRNAs (23S and 16S). Processes some mRNAs, and tRNAs when they are encoded in the rRNA operon. Processes pre-crRNA and tracrRNA of type II CRISPR loci if present in the organism. The chain is Ribonuclease 3 from Shewanella frigidimarina (strain NCIMB 400).